We begin with the raw amino-acid sequence, 305 residues long: N-acetylneuraminate lyase (305 aa).

Aceneuramate contacts are provided by Thr51 and Thr52. Residue Tyr143 is the Proton donor of the active site. Lys173 acts as the Schiff-base intermediate with substrate in catalysis. Aceneuramate is bound by residues Thr175, Gly197, Asp199, Glu200, and Ser216.

This sequence belongs to the DapA family. NanA subfamily. As to quaternary structure, homotetramer.

The protein resides in the cytoplasm. It carries out the reaction aceneuramate = aldehydo-N-acetyl-D-mannosamine + pyruvate. It functions in the pathway amino-sugar metabolism; N-acetylneuraminate degradation. In terms of biological role, catalyzes the cleavage of N-acetylneuraminic acid (sialic acid) to form pyruvate and N-acetylmannosamine via a Schiff base intermediate. It prevents sialic acids from being recycled and returning to the cell surface. Involved in the N-glycolylneuraminic acid (Neu5Gc) degradation pathway. The chain is N-acetylneuraminate lyase from Xenopus tropicalis (Western clawed frog).